Consider the following 266-residue polypeptide: GTP cyclohydrolase III (266 aa).

This sequence belongs to the archaeal-type GTP cyclohydrolase family.

The catalysed reaction is GTP + 3 H2O = 2-amino-5-formylamino-6-(5-phospho-D-ribosylamino)pyrimidin-4(3H)-one + 2 phosphate + 2 H(+). Catalyzes the formation of 2-amino-5-formylamino-6-ribofuranosylamino-4(3H)-pyrimidinone ribonucleotide monophosphate and inorganic phosphate from GTP. Also has an independent pyrophosphate phosphohydrolase activity. This Methanococcus maripaludis (strain DSM 14266 / JCM 13030 / NBRC 101832 / S2 / LL) protein is GTP cyclohydrolase III.